Reading from the N-terminus, the 39-residue chain is Phospholipase A2 (39 aa).

H36 is an active-site residue.

Belongs to the phospholipase A2 family. Group III subfamily. Requires Ca(2+) as cofactor. As to expression, expressed by the venom gland.

It is found in the secreted. The enzyme catalyses a 1,2-diacyl-sn-glycero-3-phosphocholine + H2O = a 1-acyl-sn-glycero-3-phosphocholine + a fatty acid + H(+). PLA2 catalyzes the calcium-dependent hydrolysis of the 2-acyl groups in 3-sn-phosphoglycerides. The sequence is that of Phospholipase A2 from Heloderma horridum horridum (Mexican beaded lizard).